The following is a 207-amino-acid chain: Protein-L-isoaspartate O-methyltransferase (207 aa).

Residue Ser56 is part of the active site.

The protein belongs to the methyltransferase superfamily. L-isoaspartyl/D-aspartyl protein methyltransferase family.

It is found in the cytoplasm. It catalyses the reaction [protein]-L-isoaspartate + S-adenosyl-L-methionine = [protein]-L-isoaspartate alpha-methyl ester + S-adenosyl-L-homocysteine. Catalyzes the methyl esterification of L-isoaspartyl residues in peptides and proteins that result from spontaneous decomposition of normal L-aspartyl and L-asparaginyl residues. It plays a role in the repair and/or degradation of damaged proteins. The protein is Protein-L-isoaspartate O-methyltransferase of Pyrobaculum islandicum (strain DSM 4184 / JCM 9189 / GEO3).